Reading from the N-terminus, the 212-residue chain is Thymidylate kinase (212 aa).

Residue Gly-11–Thr-18 coordinates ATP.

This sequence belongs to the thymidylate kinase family.

The enzyme catalyses dTMP + ATP = dTDP + ADP. Phosphorylation of dTMP to form dTDP in both de novo and salvage pathways of dTTP synthesis. The protein is Thymidylate kinase of Streptococcus mutans serotype c (strain ATCC 700610 / UA159).